The sequence spans 377 residues: Alanine racemase (377 aa).

The active-site Proton acceptor; specific for D-alanine is the K37. Position 37 is an N6-(pyridoxal phosphate)lysine (K37). Residue R135 coordinates substrate. Y271 acts as the Proton acceptor; specific for L-alanine in catalysis. Residue M319 coordinates substrate.

This sequence belongs to the alanine racemase family. Pyridoxal 5'-phosphate serves as cofactor.

The enzyme catalyses L-alanine = D-alanine. It functions in the pathway amino-acid biosynthesis; D-alanine biosynthesis; D-alanine from L-alanine: step 1/1. In terms of biological role, catalyzes the interconversion of L-alanine and D-alanine. May also act on other amino acids. The sequence is that of Alanine racemase (alr) from Helicobacter pylori (strain J99 / ATCC 700824) (Campylobacter pylori J99).